The sequence spans 261 residues: Putative hydro-lyase VSAL_I1435 (261 aa).

Belongs to the D-glutamate cyclase family.

This Aliivibrio salmonicida (strain LFI1238) (Vibrio salmonicida (strain LFI1238)) protein is Putative hydro-lyase VSAL_I1435.